A 258-amino-acid chain; its full sequence is Imidazole glycerol phosphate synthase subunit HisF (258 aa).

Active-site residues include aspartate 11 and aspartate 130.

This sequence belongs to the HisA/HisF family. Heterodimer of HisH and HisF.

It is found in the cytoplasm. It catalyses the reaction 5-[(5-phospho-1-deoxy-D-ribulos-1-ylimino)methylamino]-1-(5-phospho-beta-D-ribosyl)imidazole-4-carboxamide + L-glutamine = D-erythro-1-(imidazol-4-yl)glycerol 3-phosphate + 5-amino-1-(5-phospho-beta-D-ribosyl)imidazole-4-carboxamide + L-glutamate + H(+). Its pathway is amino-acid biosynthesis; L-histidine biosynthesis; L-histidine from 5-phospho-alpha-D-ribose 1-diphosphate: step 5/9. Its function is as follows. IGPS catalyzes the conversion of PRFAR and glutamine to IGP, AICAR and glutamate. The HisF subunit catalyzes the cyclization activity that produces IGP and AICAR from PRFAR using the ammonia provided by the HisH subunit. The protein is Imidazole glycerol phosphate synthase subunit HisF of Shigella sonnei (strain Ss046).